A 341-amino-acid polypeptide reads, in one-letter code: Tetraacyldisaccharide 4'-kinase (341 aa).

54 to 61 provides a ligand contact to ATP; that stretch reads TVGGAGKT.

This sequence belongs to the LpxK family.

It carries out the reaction a lipid A disaccharide + ATP = a lipid IVA + ADP + H(+). The protein operates within glycolipid biosynthesis; lipid IV(A) biosynthesis; lipid IV(A) from (3R)-3-hydroxytetradecanoyl-[acyl-carrier-protein] and UDP-N-acetyl-alpha-D-glucosamine: step 6/6. Its function is as follows. Transfers the gamma-phosphate of ATP to the 4'-position of a tetraacyldisaccharide 1-phosphate intermediate (termed DS-1-P) to form tetraacyldisaccharide 1,4'-bis-phosphate (lipid IVA). In Brucella anthropi (strain ATCC 49188 / DSM 6882 / CCUG 24695 / JCM 21032 / LMG 3331 / NBRC 15819 / NCTC 12168 / Alc 37) (Ochrobactrum anthropi), this protein is Tetraacyldisaccharide 4'-kinase.